A 98-amino-acid chain; its full sequence is Large ribosomal subunit protein uL23 (98 aa).

The protein belongs to the universal ribosomal protein uL23 family. In terms of assembly, part of the 50S ribosomal subunit. Contacts protein L29, and trigger factor when it is bound to the ribosome.

In terms of biological role, one of the early assembly proteins it binds 23S rRNA. One of the proteins that surrounds the polypeptide exit tunnel on the outside of the ribosome. Forms the main docking site for trigger factor binding to the ribosome. The chain is Large ribosomal subunit protein uL23 from Nitrosococcus oceani (strain ATCC 19707 / BCRC 17464 / JCM 30415 / NCIMB 11848 / C-107).